The chain runs to 126 residues: MAARGAMLRYLRVNVNPTIQNPRECVLPFSILLRRFSEEVRGSFLDKSEVTDRVLSVVKNFQKVDPSKVTPKANFQNDLGLDSLDSVEVVMALEEEFGFEIPDNEADKIQSIDLAVDFIASHPQAK.

Residues 1 to 36 constitute a mitochondrion transit peptide; the sequence is MAARGAMLRYLRVNVNPTIQNPRECVLPFSILLRRF. In terms of domain architecture, Carrier spans 48–123; it reads SEVTDRVLSV…LAVDFIASHP (76 aa). Residue Ser83 is modified to O-(pantetheine 4'-phosphoryl)serine.

It belongs to the acyl carrier protein (ACP) family. Complex I is composed of at least 49 different subunits. Post-translationally, 4'-phosphopantetheine is transferred from CoA to a specific serine of the apo-ACP-like protein.

It localises to the mitochondrion. It functions in the pathway lipid metabolism; fatty acid biosynthesis. Its function is as follows. Carrier of the growing fatty acid chain in fatty acid biosynthesis. May be involved in the synthesis of short and medium chain fatty acids. Accessory and non-catalytic subunit of the mitochondrial membrane respiratory chain NADH dehydrogenase (Complex I), which functions in the transfer of electrons from NADH to the respiratory chain. This is Acyl carrier protein 2, mitochondrial (MTACP2) from Arabidopsis thaliana (Mouse-ear cress).